We begin with the raw amino-acid sequence, 63 residues long: Large ribosomal subunit protein bL28 (63 aa).

It belongs to the bacterial ribosomal protein bL28 family.

This Geotalea daltonii (strain DSM 22248 / JCM 15807 / FRC-32) (Geobacter daltonii) protein is Large ribosomal subunit protein bL28.